Reading from the N-terminus, the 264-residue chain is Thymidylate synthase (264 aa).

Arg21 serves as a coordination point for dUMP. His51 is a binding site for (6R)-5,10-methylene-5,6,7,8-tetrahydrofolate. 126-127 serves as a coordination point for dUMP; that stretch reads RR. Cys146 acts as the Nucleophile in catalysis. Residues 166–169, Asn177, and 207–209 each bind dUMP; these read RSAD and HLY. Asp169 contributes to the (6R)-5,10-methylene-5,6,7,8-tetrahydrofolate binding site. A (6R)-5,10-methylene-5,6,7,8-tetrahydrofolate-binding site is contributed by Ala263.

The protein belongs to the thymidylate synthase family. Bacterial-type ThyA subfamily. Homodimer.

It localises to the cytoplasm. The enzyme catalyses dUMP + (6R)-5,10-methylene-5,6,7,8-tetrahydrofolate = 7,8-dihydrofolate + dTMP. It functions in the pathway pyrimidine metabolism; dTTP biosynthesis. Functionally, catalyzes the reductive methylation of 2'-deoxyuridine-5'-monophosphate (dUMP) to 2'-deoxythymidine-5'-monophosphate (dTMP) while utilizing 5,10-methylenetetrahydrofolate (mTHF) as the methyl donor and reductant in the reaction, yielding dihydrofolate (DHF) as a by-product. This enzymatic reaction provides an intracellular de novo source of dTMP, an essential precursor for DNA biosynthesis. The protein is Thymidylate synthase of Rhodopirellula baltica (strain DSM 10527 / NCIMB 13988 / SH1).